Consider the following 109-residue polypeptide: Flagellar hook-basal body complex protein FliE (109 aa).

It belongs to the FliE family.

The protein localises to the bacterial flagellum basal body. In Pseudomonas fluorescens (strain SBW25), this protein is Flagellar hook-basal body complex protein FliE.